We begin with the raw amino-acid sequence, 341 residues long: Glycerol-3-phosphate dehydrogenase [NAD(P)+] (341 aa).

NADPH is bound by residues Ser-17, Trp-18, Arg-37, and Lys-112. Sn-glycerol 3-phosphate-binding residues include Lys-112 and Gly-140. Ala-144 contributes to the NADPH binding site. Positions 195, 248, 258, 259, and 260 each coordinate sn-glycerol 3-phosphate. Catalysis depends on Lys-195, which acts as the Proton acceptor. Arg-259 is an NADPH binding site. Positions 283 and 285 each coordinate NADPH.

It belongs to the NAD-dependent glycerol-3-phosphate dehydrogenase family.

The protein localises to the cytoplasm. The enzyme catalyses sn-glycerol 3-phosphate + NAD(+) = dihydroxyacetone phosphate + NADH + H(+). The catalysed reaction is sn-glycerol 3-phosphate + NADP(+) = dihydroxyacetone phosphate + NADPH + H(+). It participates in membrane lipid metabolism; glycerophospholipid metabolism. Its function is as follows. Catalyzes the reduction of the glycolytic intermediate dihydroxyacetone phosphate (DHAP) to sn-glycerol 3-phosphate (G3P), the key precursor for phospholipid synthesis. This chain is Glycerol-3-phosphate dehydrogenase [NAD(P)+], found in Mycobacterium avium (strain 104).